A 365-amino-acid chain; its full sequence is uncharacterized protein (365 aa).

The protein belongs to the mycobacterial PPE family.

This is an uncharacterized protein from Mycobacterium tuberculosis (strain ATCC 25618 / H37Rv).